The chain runs to 239 residues: tRNA (guanine-N(1)-)-methyltransferase (239 aa).

Residues Gly108 and 127 to 132 (LGDFVL) each bind S-adenosyl-L-methionine.

The protein belongs to the RNA methyltransferase TrmD family. As to quaternary structure, homodimer.

The protein localises to the cytoplasm. The enzyme catalyses guanosine(37) in tRNA + S-adenosyl-L-methionine = N(1)-methylguanosine(37) in tRNA + S-adenosyl-L-homocysteine + H(+). Specifically methylates guanosine-37 in various tRNAs. The sequence is that of tRNA (guanine-N(1)-)-methyltransferase from Streptococcus thermophilus (strain CNRZ 1066).